Consider the following 372-residue polypeptide: Proline-rich P65 protein homolog (372 aa).

A compositionally biased stretch (low complexity) spans 1 to 37; it reads MEKNRSAFQQNQQASNQPFNQDQNQYYQDPNQQQFNQ. A disordered region spans residues 1–100; that stretch reads MEKNRSAFQQ…GFDPNQQYYQ (100 aa). 13 consecutive repeat copies span residues 29–40, 41–52, 53–60, 61–72, 73–80, 81–92, 93–100, 101–112, 113–119, 120–131, 132–138, 139–150, and 151–162. A compositionally biased stretch (polar residues) spans 38–49; the sequence is SGFDPNQQQFNQ. Positions 53–100 are enriched in low complexity; sequence DPNQQYYQDPNQQQFNQAGFDQNQQYYQDPNQQQFNQPGFDPNQQYYQ. Positions 122-150 are disordered; that stretch reads NQQQFNQSGFDQNQYYQDPNQQQFNQPSF.

The protein is Proline-rich P65 protein homolog of Mycoplasma genitalium (strain ATCC 33530 / DSM 19775 / NCTC 10195 / G37) (Mycoplasmoides genitalium).